The primary structure comprises 432 residues: Adenylosuccinate synthetase (432 aa).

GTP is bound by residues 12-18 (GDEGKGK) and 40-42 (GHT). Asp13 acts as the Proton acceptor in catalysis. The Mg(2+) site is built by Asp13 and Gly40. Residues 13–16 (DEGK), 38–41 (NAGH), Thr132, Arg146, Gln226, Thr241, and Arg305 contribute to the IMP site. His41 serves as the catalytic Proton donor. 301-307 (TVTGRKR) is a binding site for substrate. Residues Arg307, 333–335 (KLD), and 415–417 (STS) contribute to the GTP site.

It belongs to the adenylosuccinate synthetase family. Homodimer. Requires Mg(2+) as cofactor.

Its subcellular location is the cytoplasm. The enzyme catalyses IMP + L-aspartate + GTP = N(6)-(1,2-dicarboxyethyl)-AMP + GDP + phosphate + 2 H(+). Its pathway is purine metabolism; AMP biosynthesis via de novo pathway; AMP from IMP: step 1/2. Plays an important role in the de novo pathway of purine nucleotide biosynthesis. Catalyzes the first committed step in the biosynthesis of AMP from IMP. This is Adenylosuccinate synthetase from Sinorhizobium fredii (strain NBRC 101917 / NGR234).